Consider the following 241-residue polypeptide: Lactate utilization protein C (241 aa).

This sequence belongs to the LutC/YkgG family.

Functionally, is involved in L-lactate degradation and allows cells to grow with lactate as the sole carbon source. The sequence is that of Lactate utilization protein C from Bacillus velezensis (strain DSM 23117 / BGSC 10A6 / LMG 26770 / FZB42) (Bacillus amyloliquefaciens subsp. plantarum).